A 77-amino-acid polypeptide reads, in one-letter code: Acyl carrier protein (77 aa).

Residues 1-76 (MENFDKVKDI…DAVKFINSLE (76 aa)) enclose the Carrier domain. Ser-36 is subject to O-(pantetheine 4'-phosphoryl)serine.

It belongs to the acyl carrier protein (ACP) family. In terms of processing, 4'-phosphopantetheine is transferred from CoA to a specific serine of apo-ACP by AcpS. This modification is essential for activity because fatty acids are bound in thioester linkage to the sulfhydryl of the prosthetic group.

Its subcellular location is the cytoplasm. The protein operates within lipid metabolism; fatty acid biosynthesis. Carrier of the growing fatty acid chain in fatty acid biosynthesis. The protein is Acyl carrier protein of Staphylococcus aureus (strain Mu3 / ATCC 700698).